The sequence spans 1368 residues: Cingulin (1368 aa).

The interaction with TJP3/ZO3 and myosin stretch occupies residues Met9–Phe378. The tract at residues Met9–Pro435 is head. A ZIM motif is present at residues Gln41–Gly55. Disordered stretches follow at residues Phe71–Leu264, Gly278–Asp312, Ser1053–Arg1080, Asn1163–Gly1183, and Gln1308–Cys1368. The segment covering Asn83–Ser97 has biased composition (polar residues). The interval Gly101–Glu294 is interaction with F-actin. Low complexity-rich tracts occupy residues Pro116–Ala132 and Ser200–Ser211. The segment at Ser150 to Arg295 is interaction with TJP2/ZO2. Positions Ser228–Asn256 are enriched in polar residues. The span at Ala290–Asp312 shows a compositional bias: basic and acidic residues. The interaction with myosin stretch occupies residues Glu377–Cys1368. Positions Gly436–Pro1330 form a coiled coil. Residues Lys1320–Asp1338 are compositionally biased toward basic and acidic residues. The tract at residues Ile1331–Cys1368 is tail. Over residues Ser1352–Cys1368 the composition is skewed to polar residues.

The protein belongs to the cingulin family. In terms of assembly, parallel homodimer. Interacts with TJP1/ZO1 and TJP2/ZO2 in vivo, and TJP3/ZO3, myosin and OCLN in vitro, possibly directly. Acts as an F-actin bundling protein in vitro. In terms of tissue distribution, localized on the cytoplasmic face of tight junctions of polarized epithelia and some endothelia.

It is found in the cell junction. The protein resides in the tight junction. Probably plays a role in the formation and regulation of the tight junction (TJ) paracellular permeability barrier, possibly by linking ZO proteins to the actomyosin cytoskeleton. In Xenopus laevis (African clawed frog), this protein is Cingulin.